The following is a 75-amino-acid chain: Alpha-elapitoxin-Bc2b (75 aa).

An N-terminal signal peptide occupies residues 1 to 2; the sequence is YT. 5 disulfides stabilise this stretch: cysteine 5/cysteine 24, cysteine 17/cysteine 45, cysteine 30/cysteine 34, cysteine 49/cysteine 60, and cysteine 61/cysteine 66.

In terms of assembly, monomer in solution, homodimer in crystal state. As to expression, expressed by the venom gland.

Its subcellular location is the secreted. Its function is as follows. Binds to muscular and neuronal nicotinic acetylcholine receptor (nAChR) and inhibits acetylcholine from binding to the receptor, thereby impairing neuromuscular and neuronal transmission. Blocks muscle type nAChR. Also binds with high affinity to alpha-7/CHRNA7 nAChRs. In addition, shows a weak inhibition of neuronal alpha-3-beta-2/CHRNA3-CHRNB2 nAChR. Selectively binds to alpha-1-delta subunit interface of the mouse muscle nicotinic acetylcholine receptor, with a 10-fold higher affinity for the adult than for the fetal receptors. In vivo, when intraperitoneally injected into mice, causes flaccid paralysis and respiratory distress, followed by death within 2-4 hours. In Bungarus candidus (Malayan krait), this protein is Alpha-elapitoxin-Bc2b.